The primary structure comprises 588 residues: Nucleoporin ndc-1 (588 aa).

Positions 1-12 (MMGDSHSSFTTT) are enriched in polar residues. A disordered region spans residues 1 to 55 (MMGDSHSSFTTTTDEHLYNQFSPGRRKNDFPAASSSSSSPNLRRSPNRTVSSPRV). Residues 1 to 79 (MMGDSHSSFT…FQAEISVRKR (79 aa)) are Cytoplasmic-facing. Low complexity predominate over residues 31–48 (PAASSSSSSPNLRRSPNR). The helical transmembrane segment at 80 to 100 (LAGAACGYLSTIFFIVTVSIL) threads the bilayer. The Perinuclear space portion of the chain corresponds to 101-122 (KLTIWAPFSSVQDSLAWWIYPN). Residues 123–143 (AWASIIFVGIASVAMSLFSII) form a helical membrane-spanning segment. Topologically, residues 144-159 (KFCKVDQLPRLAATDT) are cytoplasmic. A helical membrane pass occupies residues 160-180 (FALAGVALEFVTRLTFVYTAF). Residues 181-190 (CVADFSFSRE) lie on the Perinuclear space side of the membrane. The helical transmembrane segment at 191–211 (FAFVAISLAIAISSALVVFRS) threads the bilayer. Residues 212-255 (DYQLNFSHIQVNSVKTLIDFGTSLPYANISEICGIDAAISYTAA) lie on the Cytoplasmic side of the membrane. Residues 256-276 (VALILVVGPMVSGFSAWWLLL) traverse the membrane as a helical segment. Residue N277 is a topological domain, perinuclear space. Residues 278–298 (IPFHVVLFGLCFTQQFYSKIS) form a helical membrane-spanning segment. At 299 to 588 (MKIVNQIVMK…IRMICLTDEL (290 aa)) the chain is on the cytoplasmic side.

This sequence belongs to the NDC1 family.

The protein resides in the nucleus. It localises to the nuclear pore complex. It is found in the nucleus membrane. Component of the nuclear pore complex (NPC), which plays a key role in de novo assembly and insertion of NPC in the nuclear envelope. Plays a role in postmitotic nuclear pore complex assembly potentially by promoting localization of nuclear pore complex proteins to the nuclear rim. The sequence is that of Nucleoporin ndc-1 from Caenorhabditis elegans.